The following is a 57-amino-acid chain: Large ribosomal subunit protein bL32c (57 aa).

This sequence belongs to the bacterial ribosomal protein bL32 family.

Its subcellular location is the plastid. The protein localises to the chloroplast. This chain is Large ribosomal subunit protein bL32c, found in Vitis vinifera (Grape).